Consider the following 263-residue polypeptide: Phosphatidylglycerol--prolipoprotein diacylglyceryl transferase (263 aa).

The next 4 membrane-spanning stretches (helical) occupy residues 15–35 (ISIH…VYLA), 52–72 (FILL…VIFQ), 83–103 (IFAI…GAAV), and 112–132 (AIAV…AQSI). Arg134 contributes to the a 1,2-diacyl-sn-glycero-3-phospho-(1'-sn-glycerol) binding site. The next 3 membrane-spanning stretches (helical) occupy residues 170 to 190 (VPTF…ILGL), 200 to 220 (GDVT…IEGM), and 227 to 247 (FVGL…GAVL).

The protein belongs to the Lgt family.

The protein resides in the cell membrane. The enzyme catalyses L-cysteinyl-[prolipoprotein] + a 1,2-diacyl-sn-glycero-3-phospho-(1'-sn-glycerol) = an S-1,2-diacyl-sn-glyceryl-L-cysteinyl-[prolipoprotein] + sn-glycerol 1-phosphate + H(+). It participates in protein modification; lipoprotein biosynthesis (diacylglyceryl transfer). Functionally, catalyzes the transfer of the diacylglyceryl group from phosphatidylglycerol to the sulfhydryl group of the N-terminal cysteine of a prolipoprotein, the first step in the formation of mature lipoproteins. The protein is Phosphatidylglycerol--prolipoprotein diacylglyceryl transferase of Streptococcus thermophilus (strain ATCC BAA-491 / LMD-9).